We begin with the raw amino-acid sequence, 106 residues long: Guanyl-specific ribonuclease Th1 (106 aa).

2 disulfides stabilise this stretch: cysteine 5/cysteine 103 and cysteine 23/cysteine 84. Histidine 39 is a catalytic residue. The active-site Proton acceptor is the glutamate 58. Histidine 92 serves as the catalytic Proton donor.

Belongs to the ribonuclease N1/T1 family.

It catalyses the reaction [RNA] containing guanosine + H2O = an [RNA fragment]-3'-guanosine-3'-phosphate + a 5'-hydroxy-ribonucleotide-3'-[RNA fragment].. This chain is Guanyl-specific ribonuclease Th1, found in Trichoderma harzianum (Hypocrea lixii).